The primary structure comprises 544 residues: Secreted aspartic protease 9 (544 aa).

The signal sequence occupies residues 1 to 17 (MRLNSVALLSLVATALA). The disordered stretch occupies residues 31–50 (GESKDDLSPEDDSNPRFVKR). Residues 65-479 (YMATLKIGSN…DLDDYEVSLA (415 aa)) form the Peptidase A1 domain. 83–85 (DTG) is a pepstatin A binding site. The cysteines at positions 98 and 195 are disulfide-linked. Thr-167 is an active-site residue. Residues Asn-212, Asn-240, and Asn-252 are each glycosylated (N-linked (GlcNAc...) asparagine). The active site involves Asp-371. 371 to 375 (DTGST) provides a ligand contact to pepstatin A. An intrachain disulfide couples Cys-406 to Cys-441. N-linked (GlcNAc...) asparagine glycans are attached at residues Asn-422 and Asn-499. The interval 500–520 (SSGSGTTSSSGTSTSTSTRHS) is disordered.

The protein belongs to the peptidase A1 family. In terms of assembly, monomer. In terms of processing, the GPI-anchor is attached to the protein in the endoplasmic reticulum and serves to target the protein to the cell surface. There, the glucosamine-inositol phospholipid moiety is cleaved off and the GPI-modified mannoprotein is covalently attached via its lipidless GPI glycan remnant to the 1,6-beta-glucan of the outer cell wall layer.

The protein resides in the cell membrane. The protein localises to the secreted. It is found in the cell wall. The enzyme catalyses Preferential cleavage at the carboxyl of hydrophobic amino acids, but fails to cleave 15-Leu-|-Tyr-16, 16-Tyr-|-Leu-17 and 24-Phe-|-Phe-25 of insulin B chain. Activates trypsinogen, and degrades keratin.. In terms of biological role, secreted aspartic peptidases (SAPs) are a group of ten acidic hydrolases considered as key virulence factors. These enzymes supply the fungus with nutrient amino acids as well as are able to degrade the selected host's proteins involved in the immune defense. Moreover, acts toward human hemoglobin though limited proteolysis to generate a variety of antimicrobial hemocidins, enabling to compete with the other microorganisms of the same physiological niche using the microbicidal peptides generated from the host protein. Its function is as follows. Plays a key role in defense against host by cleaving histatin-5 (Hst 5), a peptide from human saliva that carries out fungicidal activity. The cleavage rate decreases in an order of SAP2 &gt; SAP9 &gt; SAP3 &gt; SAP7 &gt; SAP4 &gt; SAP1 &gt; SAP8. The first cleavage occurs between residues 'Lys-17' and 'His-18' of Hst 5, giving DSHAKRHHGYKRKFHEK and HHSHRGY peptides. Simultaneously, the DSHAKRHHGYKRK peptide is also formed. Further fragmentation by SAP9 results in FHEK product. The protein is Secreted aspartic protease 9 of Candida albicans (Yeast).